Reading from the N-terminus, the 418-residue chain is Serine/threonine-protein kinase PCRK1 (418 aa).

Residues 36 to 63 (GSEFNSRDVSGTSTESSMGRKNSYPPVS) are disordered. The Protein kinase domain occupies 84–369 (FSRSVMIGEG…EVLEMVNKIV (286 aa)). ATP-binding positions include 90-98 (IGEGGFGCV) and lysine 118. Aspartate 218 acts as the Proton acceptor in catalysis. 3 positions are modified to phosphoserine: serine 373, serine 377, and serine 385.

The protein belongs to the protein kinase superfamily. Ser/Thr protein kinase family. Interacts with FLS2.

Its subcellular location is the cell membrane. It catalyses the reaction L-seryl-[protein] + ATP = O-phospho-L-seryl-[protein] + ADP + H(+). The catalysed reaction is L-threonyl-[protein] + ATP = O-phospho-L-threonyl-[protein] + ADP + H(+). Its function is as follows. Involved in the activation of early immune responses. Plays a role in pattern-triggered immunity (PTI) induced by pathogen-associated molecular patterns (PAMPs) and damage-associated molecular patterns (DAMPs). Contributes to PTI in response to the bacterial pathogen Pseudomonas syringae pv maculicola strain ES4326. Contributes to PTI in response to the bacterial pathogen Pseudomonas syringae pv tomato strain DC3000. Functions redundantly with PCRK2 in basal resistance against bacterial pathogens and in regulation of plant immunity. Functions together with PCRK2 downstream of the PAMP receptor FLS2. Contributes to the induction of SARD1 and CBP60G, which are transcriptional activator of ICS1, an enzyme involved in salicylate (SA) biosynthesis upon pathogen attack. The polypeptide is Serine/threonine-protein kinase PCRK1 (Arabidopsis thaliana (Mouse-ear cress)).